Consider the following 1496-residue polypeptide: MTDTNELFEDQTTALQNSAPIAPLANPQHTVSRGKFRSLTLINWNGFFARTFDLDELVTTLSGGNGAGKSTTMAGFVTALIPDLTLLNFRNTTEAGSTSSSRDKGLYGKLKAGVCYAVLESLNSRGQRVITGVRLQQVAGRDKKVDIRSFSLQNVPMSDSIISILTEQVGEKARVLPLADLKDKFDGSEVLFKQYHSITDYHSFMFDLGVIPKRLRSSADRSKFYKLIEASLYGGISSVITKSLRDYLLPENTGVRQAFQDMESALRENRMTLEAIKVTQSDRDMFKHLITESTNYVSADYMRNANERRGNVQIALEQRRAWYESKSKLELEQQRLIEFSREVADISENESGLEAEYNSANDHLNLVMNALRHQEKIERYQDEVAELNEKLEEQQIALEEVSEQVETAQARADDADDQVEELRSQMADYQQALDAQQTRALQYQQAIAALEKAKQLCGLPHLDLHNVEDYHAEFAAQADDLTDQVFELEQRLSVSDMAKTQFEKAYELVCKISGEIDRSGAWNEARSLLTAFTDQKMQATQAVALRQKLADLEQRLHQQQNAERLLAEFNQKAQTQFETAEELEGYFEQQQARLEDVEAELAEFVEVRSTQRQQREQLNQQYNQLAKTAPAWHTAQSALARLEEQCGEKFEASQSVMQFMQNMLIKEREATLARDELARREAALDAQITRLSQPDGSDDVRLNQLAERFGGVLLSELYDDVSIDDAPYFSALYGEARHAIVVRDLESVKSQLEKLDDCPTDLYLIEGDPSAFDDAVFTAEELAEGVVVKVSDRQWRYSKFPEVPLFGRAAREKHLETLKAERDEVSEQHAERAFDVQKCQRLHQHLSQFVGTHLSLAFQPNPEEQMQEIAAERTEIERELNQAAGNEQQLRTQLDSAKAKLQMLNKILPLVSLLEDETLADRAEECRAQLDEAEEDEQFVRQFGNYLTQLEPIAASLKSDPAKFEQLEQDYQQAKAEQKQVQQKVFALSDVIQRRVHFSYEEAIGSEGSALTEQLRARLESAQREREQARDQLRQAQAQFTQYNQVLTGLRSSCDAKTQMLQELIREIDDLGVRGDIGAEERARSRRDELQQRLSQQRSRKGYLDKQLGTIEAEIDNLTRTLRKAERDYHTQRELVVQAKVSWCLVLKLSRNSDVEKRLNRRELAYQSAEELRSISDKALGALRTAVADNEYLRDSLRASEDSRKPENKVAFFIAVYQHLRERIRQDIIKTDDPIDAIEQMEIELSRLTNELTSREKKLAISAESVANILRKTIQREQNRILQLNQGLQNIAFGQVKGVRLVVNIRDTHAILLNALSNGREEHKDLFDSQKLSFSEALAMLYKRVNPHIEMGQRTPQTIGEELLDYRNYLDLEVETFRGADGWMRAESSALSTGEAIGTGMSILLMVVQSWEEESRRMRAKDILPSRLLFLDEAARLDATSINTLFELCERLDMQLLIAAPENISPERGTTYKLVRKITNNQEYVHVVGLKGFGQQ.

63–70 (GGNGAGKS) lines the ATP pocket. Coiled-coil stretches lie at residues 328–493 (KLEL…QRLS) and 536–632 (KMQA…APAW). The segment at 694 to 811 (PDGSDDVRLN…EVPLFGRAAR (118 aa)) is flexible hinge. Coiled-coil stretches lie at residues 861–1171 (NPEE…SAEE) and 1235–1291 (IDAI…LQNI). The span at 1082 to 1091 (RARSRRDELQ) shows a compositional bias: basic and acidic residues. The interval 1082–1101 (RARSRRDELQQRLSQQRSRK) is disordered.

This sequence belongs to the SMC family. MukB subfamily. As to quaternary structure, homodimerization via its hinge domain. Binds to DNA via its C-terminal region. Interacts, and probably forms a ternary complex, with MukE and MukF via its C-terminal region. The complex formation is stimulated by calcium or magnesium. Interacts with tubulin-related protein FtsZ.

The protein resides in the cytoplasm. Its subcellular location is the nucleoid. Its function is as follows. Plays a central role in chromosome condensation, segregation and cell cycle progression. Functions as a homodimer, which is essential for chromosome partition. Involved in negative DNA supercoiling in vivo, and by this means organize and compact chromosomes. May achieve or facilitate chromosome segregation by condensation DNA from both sides of a centrally located replisome during cell division. This chain is Chromosome partition protein MukB, found in Actinobacillus pleuropneumoniae serotype 7 (strain AP76).